The following is a 382-amino-acid chain: Lipid-A-disaccharide synthase (382 aa).

Belongs to the LpxB family.

It carries out the reaction 2-N,3-O-bis[(3R)-3-hydroxytetradecanoyl]-alpha-D-glucosaminyl 1-phosphate + UDP-2-N,3-O-bis[(3R)-3-hydroxytetradecanoyl]-alpha-D-glucosamine = lipid A disaccharide (E. coli) + UDP + H(+). The enzyme catalyses a lipid X + a UDP-2-N,3-O-bis[(3R)-3-hydroxyacyl]-alpha-D-glucosamine = a lipid A disaccharide + UDP + H(+). It participates in glycolipid biosynthesis; lipid IV(A) biosynthesis; lipid IV(A) from (3R)-3-hydroxytetradecanoyl-[acyl-carrier-protein] and UDP-N-acetyl-alpha-D-glucosamine: step 5/6. Functionally, condensation of UDP-2,3-diacylglucosamine and 2,3-diacylglucosamine-1-phosphate to form lipid A disaccharide, a precursor of lipid A, a phosphorylated glycolipid that anchors the lipopolysaccharide to the outer membrane of the cell. The polypeptide is Lipid-A-disaccharide synthase (Salmonella arizonae (strain ATCC BAA-731 / CDC346-86 / RSK2980)).